The chain runs to 726 residues: Catalase-peroxidase (726 aa).

Residues 1–33 (MSTSDDIHNTTATGKCPFHQGGHDQSAGAGTTT) form a disordered region. The segment at residues 105-226 (WHGAGTYRSI…LGATEMGLIY (122 aa)) is a cross-link (tryptophyl-tyrosyl-methioninium (Trp-Tyr) (with M-252)). Catalysis depends on His106, which acts as the Proton acceptor. Positions 226-252 (YVNPEGPDHSGEPLSAAAAIRATFGNM) form a cross-link, tryptophyl-tyrosyl-methioninium (Tyr-Met) (with W-105). A heme b-binding site is contributed by His267.

Belongs to the peroxidase family. Peroxidase/catalase subfamily. In terms of assembly, homodimer or homotetramer. It depends on heme b as a cofactor. Post-translationally, formation of the three residue Trp-Tyr-Met cross-link is important for the catalase, but not the peroxidase activity of the enzyme.

The catalysed reaction is H2O2 + AH2 = A + 2 H2O. It carries out the reaction 2 H2O2 = O2 + 2 H2O. Functionally, bifunctional enzyme with both catalase and broad-spectrum peroxidase activity. The sequence is that of Catalase-peroxidase from Shigella sonnei (strain Ss046).